Reading from the N-terminus, the 203-residue chain is Holliday junction branch migration complex subunit RuvA (203 aa).

Residues 1–64 form a domain I region; the sequence is MIGRLRGYIL…EDAQLLYGFN (64 aa). The domain II stretch occupies residues 65 to 142; that stretch reads DKQERALFRE…KGLNGDLFNN (78 aa). Positions 143-154 are flexible linker; sequence SSEITLPTAAQA. The domain III stretch occupies residues 155–203; sequence AELDAEAEAASALVALGYKPQEASRMVSKIAKPGADCETLIRDALRAAL.

This sequence belongs to the RuvA family. In terms of assembly, homotetramer. Forms an RuvA(8)-RuvB(12)-Holliday junction (HJ) complex. HJ DNA is sandwiched between 2 RuvA tetramers; dsDNA enters through RuvA and exits via RuvB. An RuvB hexamer assembles on each DNA strand where it exits the tetramer. Each RuvB hexamer is contacted by two RuvA subunits (via domain III) on 2 adjacent RuvB subunits; this complex drives branch migration. In the full resolvosome a probable DNA-RuvA(4)-RuvB(12)-RuvC(2) complex forms which resolves the HJ.

The protein localises to the cytoplasm. In terms of biological role, the RuvA-RuvB-RuvC complex processes Holliday junction (HJ) DNA during genetic recombination and DNA repair, while the RuvA-RuvB complex plays an important role in the rescue of blocked DNA replication forks via replication fork reversal (RFR). RuvA specifically binds to HJ cruciform DNA, conferring on it an open structure. The RuvB hexamer acts as an ATP-dependent pump, pulling dsDNA into and through the RuvAB complex. HJ branch migration allows RuvC to scan DNA until it finds its consensus sequence, where it cleaves and resolves the cruciform DNA. The sequence is that of Holliday junction branch migration complex subunit RuvA from Serratia proteamaculans (strain 568).